Consider the following 178-residue polypeptide: S-alkylcysteine N-acetyltransferase (178 aa).

In terms of domain architecture, N-acetyltransferase spans 4–163; it reads DIFRLATVED…IGVMMHKVLI (160 aa).

The protein belongs to the acetyltransferase family.

It catalyses the reaction an S-substituted L-cysteine + acetyl-CoA = an N-acetyl-L-cysteine-S-conjugate + CoA + H(+). It carries out the reaction S-benzyl-L-cysteine + acetyl-CoA = N-acetyl-S-benzyl-L-cysteine + CoA + H(+). The enzyme catalyses S-methyl-L-cysteine + acetyl-CoA = N-acetyl-S-methyl-L-cysteine + CoA + H(+). The protein operates within amino-acid metabolism. Functionally, involved in a cysteine salvage pathway from S-alkylcysteine. Catalyzes the first step in this pathway, i.e. the amine acetylation of an S-alkylcysteine with a preference for S-benzyl-L-cysteine over S-methyl-L-cysteine. This pathway is likely important in the catabolism of alkylated cysteine generated by proteolysis of alkylated glutathione formed in the detoxification of a wide range of electrophiles. This is S-alkylcysteine N-acetyltransferase from Bacillus subtilis (strain 168).